Reading from the N-terminus, the 811-residue chain is Phenylalanine--tRNA ligase beta subunit (811 aa).

Residues 40–156 enclose the tRNA-binding domain; sequence AEKNENIVVG…EDIEVGSKVD (117 aa). The region spanning 411 to 486 is the B5 domain; sequence KSTKEVKVPL…RIHGYDHLPY (76 aa). Mg(2+) is bound by residues Asp-464, Asp-470, Glu-473, and Glu-474. The FDX-ACB domain maps to 717 to 810; that stretch reads PRYPSVSRDI…VNKKFGSYVR (94 aa).

It belongs to the phenylalanyl-tRNA synthetase beta subunit family. Type 1 subfamily. As to quaternary structure, tetramer of two alpha and two beta subunits. It depends on Mg(2+) as a cofactor.

Its subcellular location is the cytoplasm. The enzyme catalyses tRNA(Phe) + L-phenylalanine + ATP = L-phenylalanyl-tRNA(Phe) + AMP + diphosphate + H(+). The chain is Phenylalanine--tRNA ligase beta subunit from Oceanobacillus iheyensis (strain DSM 14371 / CIP 107618 / JCM 11309 / KCTC 3954 / HTE831).